The following is a 330-amino-acid chain: Ketol-acid reductoisomerase (NADP(+)) (330 aa).

Residues 2 to 182 (VETFYEKDAD…GCTRAGVIKT (181 aa)) form the KARI N-terminal Rossmann domain. NADP(+) contacts are provided by residues 25-28 (YGSQ), K48, S51, S53, and 83-86 (DEVQ). The active site involves H108. Residue G134 participates in NADP(+) binding. The KARI C-terminal knotted domain maps to 183–328 (TFKEETETDL…EKLRAMMPWI (146 aa)). 4 residues coordinate Mg(2+): D191, E195, E227, and E231. A substrate-binding site is contributed by S252.

It belongs to the ketol-acid reductoisomerase family. The cofactor is Mg(2+).

The enzyme catalyses (2R)-2,3-dihydroxy-3-methylbutanoate + NADP(+) = (2S)-2-acetolactate + NADPH + H(+). It carries out the reaction (2R,3R)-2,3-dihydroxy-3-methylpentanoate + NADP(+) = (S)-2-ethyl-2-hydroxy-3-oxobutanoate + NADPH + H(+). Its pathway is amino-acid biosynthesis; L-isoleucine biosynthesis; L-isoleucine from 2-oxobutanoate: step 2/4. It participates in amino-acid biosynthesis; L-valine biosynthesis; L-valine from pyruvate: step 2/4. Involved in the biosynthesis of branched-chain amino acids (BCAA). Catalyzes an alkyl-migration followed by a ketol-acid reduction of (S)-2-acetolactate (S2AL) to yield (R)-2,3-dihydroxy-isovalerate. In the isomerase reaction, S2AL is rearranged via a Mg-dependent methyl migration to produce 3-hydroxy-3-methyl-2-ketobutyrate (HMKB). In the reductase reaction, this 2-ketoacid undergoes a metal-dependent reduction by NADPH to yield (R)-2,3-dihydroxy-isovalerate. This Petrotoga mobilis (strain DSM 10674 / SJ95) protein is Ketol-acid reductoisomerase (NADP(+)).